Reading from the N-terminus, the 145-residue chain is Large ribosomal subunit protein uL11 (145 aa).

It belongs to the universal ribosomal protein uL11 family. As to quaternary structure, part of the ribosomal stalk of the 50S ribosomal subunit. Interacts with L10 and the large rRNA to form the base of the stalk. L10 forms an elongated spine to which L12 dimers bind in a sequential fashion forming a multimeric L10(L12)X complex. In terms of processing, one or more lysine residues are methylated.

In terms of biological role, forms part of the ribosomal stalk which helps the ribosome interact with GTP-bound translation factors. The protein is Large ribosomal subunit protein uL11 of Rickettsia typhi (strain ATCC VR-144 / Wilmington).